We begin with the raw amino-acid sequence, 294 residues long: Golgi phosphoprotein 3 homolog sauron (294 aa).

Residues 1-52 (MNRSDGLVRRSVKPRENGGAEGGLNANTPDDNQDALDNLKDQEDNIDDGDSK) are disordered. The span at 37-52 (DNLKDQEDNIDDGDSK) shows a compositional bias: basic and acidic residues. Tryptophan 77, arginine 86, lysine 167, and arginine 170 together coordinate a 1,2-diacyl-sn-glycero-3-phospho-(1D-myo-inositol 4-phosphate). A beta-hairpin required for oligomerization region spans residues 186 to 197 (EKQNFLLFDMTT).

Belongs to the GOLPH3/VPS74 family. In terms of assembly, homooligomer. Interacts with botv, Ext2 and ttv. Interacts with Vti1. Interacts with Vps35, Rab5, Chc, Rab11, zip, Pav and Septin1.

It localises to the golgi apparatus membrane. The protein localises to the cytoplasmic vesicle. Its subcellular location is the cleavage furrow. Phosphatidylinositol-4-phosphate-binding protein that links Golgi membranes to the cytoskeleton and may participate in the tensile force required for vesicle budding from the Golgi. Thereby, may play a role in Golgi membrane trafficking and could indirectly give its flattened shape to the Golgi apparatus. May also bind to the coatomer to regulate Golgi membrane trafficking. May play a role in anterograde transport from the Golgi to the plasma membrane and regulate secretion. Also involved in the control of the localization of Golgi enzymes through interaction with their cytoplasmic part. Functions in cytokinesis by regulating contractile ring formation and vesicle trafficking during cleavage furrow ingression. May also have a role in the intital steps of central spindle formation. Can also bind phosphatidylinositol-3-phosphate and phosphatidylinositol-5-phosphate in vitro. The polypeptide is Golgi phosphoprotein 3 homolog sauron (Drosophila melanogaster (Fruit fly)).